The chain runs to 307 residues: Ribosomal RNA small subunit methyltransferase H (307 aa).

S-adenosyl-L-methionine-binding positions include 33–35 (GGH), Asp52, Leu83, Asp97, and Gln104.

This sequence belongs to the methyltransferase superfamily. RsmH family.

The protein resides in the cytoplasm. It carries out the reaction cytidine(1402) in 16S rRNA + S-adenosyl-L-methionine = N(4)-methylcytidine(1402) in 16S rRNA + S-adenosyl-L-homocysteine + H(+). In terms of biological role, specifically methylates the N4 position of cytidine in position 1402 (C1402) of 16S rRNA. The protein is Ribosomal RNA small subunit methyltransferase H of Campylobacter fetus subsp. fetus (strain 82-40).